Reading from the N-terminus, the 474-residue chain is 4-O-methyl-glucuronoyl methylesterase (474 aa).

The N-terminal stretch at 1-17 is a signal peptide; sequence MFKPSFVALALVSYATA. The 37-residue stretch at 19 to 55 folds into the CBM1 domain; sequence ASAPQWGQCGGIGWTGPTACPSGWACQQLNAYYSQCL. The disordered stretch occupies residues 61-91; the sequence is APARTTAAPPPPPATTAAPPPPTTSAPTGSS. Over residues 68-84 the composition is skewed to pro residues; sequence APPPPPATTAAPPPPTT. Residue Asn-120 is glycosylated (N-linked (GlcNAc...) asparagine). The GXSYXG catalytic site motif motif lies at 284 to 289; it reads GCSRDG. Disulfide bonds link Cys-285–Cys-421 and Cys-317–Cys-393. The active-site Nucleophile is the Ser-286. Substrate contacts are provided by Lys-290, Gln-332, Glu-340, and Trp-384. Residue His-420 is the Proton donor/acceptor of the active site.

The protein belongs to the carbohydrate esterase 15 (CE15) family. In terms of processing, N-glycosylated.

The protein resides in the secreted. It catalyses the reaction a 4-O-methyl-alpha-D-glucuronosyl ester derivative + H2O = 4-O-methyl-alpha-D-glucuronate derivative + an alcohol + H(+). In terms of biological role, glucuronoyl esterase which may play a significant role in biomass degradation, as it is considered to disconnect hemicellulose from lignin through the hydrolysis of the ester bond between 4-O-methyl-D-glucuronic acid residues of glucuronoxylans and aromatic alcohols of lignin. The sequence is that of 4-O-methyl-glucuronoyl methylesterase from Cerrena unicolor (Canker rot fungus).